The chain runs to 137 residues: Transcription antitermination protein NusB (137 aa).

It belongs to the NusB family.

In terms of biological role, involved in transcription antitermination. Required for transcription of ribosomal RNA (rRNA) genes. Binds specifically to the boxA antiterminator sequence of the ribosomal RNA (rrn) operons. This is Transcription antitermination protein NusB from Actinobacillus pleuropneumoniae serotype 5b (strain L20).